Here is a 229-residue protein sequence, read N- to C-terminus: Clathrin light chain B (229 aa).

Composition is skewed to low complexity over residues 1 to 17 and 45 to 58; these read MAED…GAPE and GAPA…AQPG. The tract at residues 1 to 70 is disordered; it reads MAEDFGFFSS…SGAGSEDMST (70 aa). 2 positions are modified to phosphoserine: serine 11 and serine 13. Residues 93–155 are involved in binding clathrin heavy chain; sequence ADRLTQEPES…QVEKNKINNR (63 aa). Threonine 187 bears the Phosphothreonine mark. Cysteine 199 and cysteine 209 are joined by a disulfide. N6-acetyllysine is present on lysine 204. At serine 217 the chain carries Phosphoserine.

Belongs to the clathrin light chain family. In terms of assembly, clathrin coats are formed from molecules containing 3 heavy chains and 3 light chains. Interacts (via N-terminus) with HIP1. Interacts with HIP1R.

The protein localises to the cytoplasmic vesicle membrane. Its subcellular location is the membrane. The protein resides in the coated pit. Functionally, clathrin is the major protein of the polyhedral coat of coated pits and vesicles. The polypeptide is Clathrin light chain B (Cltb) (Mus musculus (Mouse)).